Reading from the N-terminus, the 314-residue chain is Methionyl-tRNA formyltransferase (314 aa).

109–112 (SLLP) serves as a coordination point for (6S)-5,6,7,8-tetrahydrofolate.

This sequence belongs to the Fmt family.

The enzyme catalyses L-methionyl-tRNA(fMet) + (6R)-10-formyltetrahydrofolate = N-formyl-L-methionyl-tRNA(fMet) + (6S)-5,6,7,8-tetrahydrofolate + H(+). Functionally, attaches a formyl group to the free amino group of methionyl-tRNA(fMet). The formyl group appears to play a dual role in the initiator identity of N-formylmethionyl-tRNA by promoting its recognition by IF2 and preventing the misappropriation of this tRNA by the elongation apparatus. In Alkaliphilus metalliredigens (strain QYMF), this protein is Methionyl-tRNA formyltransferase.